A 393-amino-acid chain; its full sequence is ATP phosphoribosyltransferase regulatory subunit (393 aa).

This sequence belongs to the class-II aminoacyl-tRNA synthetase family. HisZ subfamily. As to quaternary structure, heteromultimer composed of HisG and HisZ subunits.

It localises to the cytoplasm. It functions in the pathway amino-acid biosynthesis; L-histidine biosynthesis; L-histidine from 5-phospho-alpha-D-ribose 1-diphosphate: step 1/9. Required for the first step of histidine biosynthesis. May allow the feedback regulation of ATP phosphoribosyltransferase activity by histidine. In Marinobacter nauticus (strain ATCC 700491 / DSM 11845 / VT8) (Marinobacter aquaeolei), this protein is ATP phosphoribosyltransferase regulatory subunit.